The following is a 148-amino-acid chain: Ubiquitin-conjugating enzyme E2 30 (148 aa).

Residues 1–147 (MASKRINKEL…AQSWTQKYAM (147 aa)) enclose the UBC core domain. The active-site Glycyl thioester intermediate is Cys-85.

Belongs to the ubiquitin-conjugating enzyme family. As to quaternary structure, interacts with RGLG3 and RGLG4. Ubiquitously expressed at very low levels.

It carries out the reaction S-ubiquitinyl-[E1 ubiquitin-activating enzyme]-L-cysteine + [E2 ubiquitin-conjugating enzyme]-L-cysteine = [E1 ubiquitin-activating enzyme]-L-cysteine + S-ubiquitinyl-[E2 ubiquitin-conjugating enzyme]-L-cysteine.. It functions in the pathway protein modification; protein ubiquitination. Its function is as follows. Accepts the ubiquitin from the E1 complex and catalyzes its covalent attachment to other proteins. This is Ubiquitin-conjugating enzyme E2 30 (UBC30) from Arabidopsis thaliana (Mouse-ear cress).